Reading from the N-terminus, the 429-residue chain is Adenylosuccinate synthetase (429 aa).

GTP is bound by residues 12–18 (GDEGKGK) and 40–42 (GHT). Asp-13 serves as the catalytic Proton acceptor. The Mg(2+) site is built by Asp-13 and Gly-40. IMP is bound by residues 13 to 16 (DEGK), 38 to 41 (NAGH), Thr-129, Arg-143, Gln-224, Thr-239, and Arg-303. Residue His-41 is the Proton donor of the active site. Residue 299 to 305 (VTTGRAR) participates in substrate binding. GTP-binding positions include Arg-305, 331–333 (KLD), and 413–415 (GVG).

The protein belongs to the adenylosuccinate synthetase family. Homodimer. Mg(2+) serves as cofactor.

The protein resides in the cytoplasm. The enzyme catalyses IMP + L-aspartate + GTP = N(6)-(1,2-dicarboxyethyl)-AMP + GDP + phosphate + 2 H(+). The protein operates within purine metabolism; AMP biosynthesis via de novo pathway; AMP from IMP: step 1/2. Functionally, plays an important role in the de novo pathway of purine nucleotide biosynthesis. Catalyzes the first committed step in the biosynthesis of AMP from IMP. The protein is Adenylosuccinate synthetase of Rhodococcus jostii (strain RHA1).